Here is a 234-residue protein sequence, read N- to C-terminus: MSEQIFELKGNLFTLSVLHLYSTDINLLAEQLYIKIAQAPKFFEGAPIVVNLIEIKNNSLDFVHLKSLLERMSFNAVGVCNGSDEQHTQAKAAGLSVLNYSQDVKSESVKKEPNTSIVEKTVHLPAQIINGTVRSGQQVYAKDRDLVVLGAVSHGAEVIADGNVHIYGTLRGRAIAGAKGFKNAHIFCNRLEAELVSINGNYWISDSLQGEHWGSAVQIQQKNESLEISALVKG.

This sequence belongs to the MinC family. Interacts with MinD and FtsZ.

Cell division inhibitor that blocks the formation of polar Z ring septums. Rapidly oscillates between the poles of the cell to destabilize FtsZ filaments that have formed before they mature into polar Z rings. Prevents FtsZ polymerization. In Pseudoalteromonas translucida (strain TAC 125), this protein is Probable septum site-determining protein MinC.